A 192-amino-acid polypeptide reads, in one-letter code: Orotate phosphoribosyltransferase 2 (192 aa).

Position 116-124 (116-124 (EDIVTTGLS)) interacts with 5-phospho-alpha-D-ribose 1-diphosphate. Orotate-binding residues include Thr-120 and Arg-148.

This sequence belongs to the purine/pyrimidine phosphoribosyltransferase family. PyrE subfamily. In terms of assembly, homodimer. The cofactor is Mg(2+).

The enzyme catalyses orotidine 5'-phosphate + diphosphate = orotate + 5-phospho-alpha-D-ribose 1-diphosphate. The protein operates within pyrimidine metabolism; UMP biosynthesis via de novo pathway; UMP from orotate: step 1/2. Catalyzes the transfer of a ribosyl phosphate group from 5-phosphoribose 1-diphosphate to orotate, leading to the formation of orotidine monophosphate (OMP). The protein is Orotate phosphoribosyltransferase 2 of Mesorhizobium japonicum (strain LMG 29417 / CECT 9101 / MAFF 303099) (Mesorhizobium loti (strain MAFF 303099)).